We begin with the raw amino-acid sequence, 228 residues long: MASVAKTGAEALRNAPFRVGKKQIFLPNHVITFVRPLPKQPPNLATFIVPLEFNKLDLRDYLYHVYNVEVTGVRSFVNQRMHEQRHGDVGNWRRPKSQKMMIAELAKPFVWPKPPAEDAREAFDYAMWKKQKTAQEQDTKFQGIRAQGEVVPPSQFEVTKDRKAIKARQSKFLSGEETWAPGKVNAFLNSKIVPEEEGWSEVEENLPLDESAESAAEESSSKGSETRQ.

The tract at residues 194-228 (PEEEGWSEVEENLPLDESAESAAEESSSKGSETRQ) is disordered. Residues 195–216 (EEEGWSEVEENLPLDESAESAA) show a composition bias toward acidic residues.

This sequence belongs to the universal ribosomal protein uL23 family. In terms of assembly, component of the mitochondrial large ribosomal subunit (mt-LSU). Mature N.crassa 74S mitochondrial ribosomes consist of a small (37S) and a large (54S) subunit. The 37S small subunit contains a 16S ribosomal RNA (16S mt-rRNA) and 32 different proteins. The 54S large subunit contains a 23S rRNA (23S mt-rRNA) and 42 different proteins. uL23m forms the wall of the exit tunnel.

It localises to the mitochondrion. Component of the mitochondrial ribosome (mitoribosome), a dedicated translation machinery responsible for the synthesis of mitochondrial genome-encoded proteins, including at least some of the essential transmembrane subunits of the mitochondrial respiratory chain. The mitoribosomes are attached to the mitochondrial inner membrane and translation products are cotranslationally integrated into the membrane. The protein is Large ribosomal subunit protein uL23m (mrp20) of Neurospora crassa (strain ATCC 24698 / 74-OR23-1A / CBS 708.71 / DSM 1257 / FGSC 987).